Consider the following 718-residue polypeptide: Catalase-peroxidase (718 aa).

A cross-link (tryptophyl-tyrosyl-methioninium (Trp-Tyr) (with M-245)) is located at residues 98 to 219 (WHAAGTYRMG…LAATEMGLIY (122 aa)). Histidine 99 acts as the Proton acceptor in catalysis. Positions 219–245 (YVNPEGPQASGDPRSAAPFIRATFGNM) form a cross-link, tryptophyl-tyrosyl-methioninium (Tyr-Met) (with W-98). Residue histidine 260 coordinates heme b.

The protein belongs to the peroxidase family. Peroxidase/catalase subfamily. In terms of assembly, homodimer or homotetramer. The cofactor is heme b. In terms of processing, formation of the three residue Trp-Tyr-Met cross-link is important for the catalase, but not the peroxidase activity of the enzyme.

It carries out the reaction H2O2 + AH2 = A + 2 H2O. The catalysed reaction is 2 H2O2 = O2 + 2 H2O. Its function is as follows. Bifunctional enzyme with both catalase and broad-spectrum peroxidase activity. The polypeptide is Catalase-peroxidase (Acinetobacter baumannii (strain ATCC 17978 / DSM 105126 / CIP 53.77 / LMG 1025 / NCDC KC755 / 5377)).